The primary structure comprises 341 residues: MRRNSERPVRITEVCLRDGSHVMKHQFTEEQVRSVTRTLDEAGMHYIEVSHGDGLGGSTLQYGKSLVNEMKLIEAAVDECKQAKVAVLLIPGIGTIHELKQAANIGAKLVRVATHVTEADVSAQHIQFARELGMEVCGFLMMAHSASVEKLVEQAKLMESYGAEAVYVTDSAGALLPHEVRERIRALRQSLNIEIGFHGHNNLSVAVANTITAIEEGATRIDGSVRCLGAGAGNAQTEVLLAVLDRMGYKLDIDLYKMMDVAEEGVAPLLPVPQEIQKGSLVMGYAGVYSSFLLHAERAAQRFNVDARDILIELGKRKVVGGQEDMILDVAAELAKIKMEV.

The Pyruvate carboxyltransferase domain maps to 9–259 (VRITEVCLRD…KLDIDLYKMM (251 aa)). 17 to 18 (RD) contacts substrate. Residue Asp18 coordinates Mn(2+). The active-site Proton acceptor is His21. Substrate-binding residues include Ser171 and His198. Positions 198 and 200 each coordinate Mn(2+). Substrate is bound at residue Tyr289.

Belongs to the 4-hydroxy-2-oxovalerate aldolase family.

The enzyme catalyses (S)-4-hydroxy-2-oxopentanoate = acetaldehyde + pyruvate. In Bacillus cereus (strain ATCC 10987 / NRS 248), this protein is 4-hydroxy-2-oxovalerate aldolase.